The chain runs to 263 residues: 4-hydroxy-2-oxo-heptane-1,7-dioate aldolase (263 aa).

The active-site Proton acceptor is His45. Gln147 lines the substrate pocket. An a divalent metal cation-binding site is contributed by Glu149. Ala174 and Asp175 together coordinate substrate. Asp175 contributes to the a divalent metal cation binding site.

Belongs to the HpcH/HpaI aldolase family. As to quaternary structure, homohexamer; trimer of dimers. A divalent metal cation serves as cofactor.

It carries out the reaction 4-hydroxy-2-oxoheptanedioate = succinate semialdehyde + pyruvate. It participates in aromatic compound metabolism; 4-hydroxyphenylacetate degradation; pyruvate and succinate semialdehyde from 4-hydroxyphenylacetate: step 7/7. Functionally, catalyzes the reversible retro-aldol cleavage of 4-hydroxy-2-ketoheptane-1,7-dioate (HKHD) to pyruvate and succinic semialdehyde. The protein is 4-hydroxy-2-oxo-heptane-1,7-dioate aldolase of Salmonella newport (strain SL254).